We begin with the raw amino-acid sequence, 838 residues long: Leucine--tRNA ligase (838 aa).

Positions 36–46 match the 'HIGH' region motif; the sequence is PYPSGKIHMGH. The short motif at 611 to 615 is the 'KMSKS' region element; that stretch reads KMSKS. Residue lysine 614 coordinates ATP.

This sequence belongs to the class-I aminoacyl-tRNA synthetase family.

The protein localises to the cytoplasm. It catalyses the reaction tRNA(Leu) + L-leucine + ATP = L-leucyl-tRNA(Leu) + AMP + diphosphate. The polypeptide is Leucine--tRNA ligase (Wolbachia sp. subsp. Drosophila simulans (strain wRi)).